The primary structure comprises 450 residues: Putative gustatory receptor 28a (450 aa).

Over 1–47 (MAFKLWERFSQADNVFQALRPLTFISLLGLAPFRLNLNPRKEVQTSK) the chain is Cytoplasmic. Residues 48–68 (FSFFAGIVHFLFFVLCFGISV) form a helical membrane-spanning segment. At 69–87 (KEGDSIIGYFFQTNITRFS) the chain is on the extracellular side. The N-linked (GlcNAc...) asparagine glycan is linked to N82. Residues 88-108 (DGTLRLTGILAMSTIFGFAMF) form a helical membrane-spanning segment. Residues 109–138 (KRQRLVSIIQNNIVVDEIFVRLGMKLDYRR) lie on the Cytoplasmic side of the membrane. The helical transmembrane segment at 139–159 (ILLSSFLISLGMLLFNVIYLC) threads the bilayer. Topologically, residues 160–171 (VSYSLLVSATIS) are extracellular. The chain crosses the membrane as a helical span at residues 172 to 192 (PSFVTFTTFALPHINISLMVF). The Cytoplasmic segment spans residues 193-292 (KFLCTTDLAR…CQTIEEYFTY (100 aa)). A helical transmembrane segment spans residues 293–313 (PLLGIIAISFLFILFDDFYIL). At 314 to 329 (EAILNPKRLDVFEADE) the chain is on the extracellular side. The helical transmembrane segment at 330 to 350 (FFAFFLMQLIWYIVIIVLIVE) threads the bilayer. Residues 351–407 (GSSRTILHSSYTAAIVHKILNITDDPELRDRLFRLSLQLSHRKVLFTAAGLFRLDRT) lie on the Cytoplasmic side of the membrane. Residues 408 to 424 (LIFTITGAATCYLIILI) traverse the membrane as a helical segment. Residues 425–450 (QFRFTHHMDDTSSNSTNNLHSIHLGD) lie on the Extracellular side of the membrane. N-linked (GlcNAc...) asparagine glycosylation is present at N438.

It belongs to the insect chemoreceptor superfamily. Gustatory receptor (GR) family. Gr2a subfamily. As to expression, in addition to expression in a large number of taste neurons, Gr28a is also expressed in a few nonchemosensory neurons, including the campaniform sensilla of the wing, leg stretch receptors, and multiple dendritic (MD) neurons in the abdomen. In larvea, is expressed in neurons of the terminal external chemosensory organ, the dorsal external chemosensory organ, as well as in the ventral and posterior pharyngeal sense organ.

It localises to the cell membrane. Functionally, probable gustatory receptor which mediates acceptance or avoidance behavior, depending on its substrates. Atypical expression also suggests nongustatory roles in the nervous system and tissues involved in proprioception, hygroreception, and other sensory modalities. It is also possible that it has chemosensory roles in the detection of internal ligands. The protein is Putative gustatory receptor 28a (Gr28a) of Drosophila melanogaster (Fruit fly).